A 399-amino-acid chain; its full sequence is ATP-dependent RNA helicase fal1 (399 aa).

The Q motif signature appears at 25–53; it reads PTFEDMHLKESLLRGIYAYGYESPSAVQS. A Helicase ATP-binding domain is found at 56-226; it reads IVQICKGRDT…TKFMTDPVRV (171 aa). 69–76 serves as a coordination point for ATP; that stretch reads AQSGTGKT. The DEAD box motif lies at 174 to 177; the sequence is DEAD. One can recognise a Helicase C-terminal domain in the interval 237 to 398; the sequence is GIKQYFIAVE…EMPMNVADLL (162 aa).

Belongs to the DEAD box helicase family. DDX48/FAL1 subfamily.

The protein localises to the nucleus. It is found in the nucleolus. The enzyme catalyses ATP + H2O = ADP + phosphate + H(+). In terms of biological role, ATP-dependent RNA helicase involved in 40S ribosomal subunit biogenesis. Required for the processing and cleavage of 35S pre-rRNA at sites A0, A1, and A2, leading to mature 18S rRNA. This Aspergillus clavatus (strain ATCC 1007 / CBS 513.65 / DSM 816 / NCTC 3887 / NRRL 1 / QM 1276 / 107) protein is ATP-dependent RNA helicase fal1 (fal1).